A 146-amino-acid chain; its full sequence is Villin-like protein ABP41 (146 aa).

It belongs to the villin/gelsolin family. As to quaternary structure, binds to actin. In terms of tissue distribution, expressed in pollen (at protein level).

It localises to the cytoplasm. Its subcellular location is the cytoskeleton. Its function is as follows. Ca(2+)-dependent actin filament-severing protein that is required for pollen tube growth. Probably regulates the dynamics of the actin cytoskeleton. It can promote the assembly of monomers into filaments (nucleation) as well as sever filaments already formed. This is Villin-like protein ABP41 from Lilium davidii (David's lily).